Reading from the N-terminus, the 307-residue chain is Serine/threonine-protein phosphatase PP2A-2 catalytic subunit (307 aa).

D55, H57, D83, and N115 together coordinate Mn(2+). Residue H116 is the Proton donor of the active site. 2 residues coordinate Mn(2+): H165 and H239.

Belongs to the PPP phosphatase family. PP-2A subfamily. It depends on Mn(2+) as a cofactor.

The protein localises to the cytoplasm. It carries out the reaction O-phospho-L-seryl-[protein] + H2O = L-seryl-[protein] + phosphate. It catalyses the reaction O-phospho-L-threonyl-[protein] + H2O = L-threonyl-[protein] + phosphate. This Oryza sativa subsp. indica (Rice) protein is Serine/threonine-protein phosphatase PP2A-2 catalytic subunit (PP2A2).